We begin with the raw amino-acid sequence, 353 residues long: Holliday junction branch migration complex subunit RuvB (353 aa).

The segment at methionine 1–threonine 25 is disordered. The tract at residues methionine 1–tyrosine 188 is large ATPase domain (RuvB-L). Residues leucine 27, arginine 28, glycine 69, lysine 72, threonine 73, serine 74, glutamate 135–tyrosine 137, arginine 178, tyrosine 188, and arginine 225 contribute to the ATP site. Threonine 73 lines the Mg(2+) pocket. Residues glutamate 189 to aspartate 259 form a small ATPAse domain (RuvB-S) region. The head domain (RuvB-H) stretch occupies residues glutamate 262–valine 353. DNA is bound by residues arginine 317 and arginine 322.

This sequence belongs to the RuvB family. In terms of assembly, homohexamer. Forms an RuvA(8)-RuvB(12)-Holliday junction (HJ) complex. HJ DNA is sandwiched between 2 RuvA tetramers; dsDNA enters through RuvA and exits via RuvB. An RuvB hexamer assembles on each DNA strand where it exits the tetramer. Each RuvB hexamer is contacted by two RuvA subunits (via domain III) on 2 adjacent RuvB subunits; this complex drives branch migration. In the full resolvosome a probable DNA-RuvA(4)-RuvB(12)-RuvC(2) complex forms which resolves the HJ.

Its subcellular location is the cytoplasm. It carries out the reaction ATP + H2O = ADP + phosphate + H(+). Its function is as follows. The RuvA-RuvB-RuvC complex processes Holliday junction (HJ) DNA during genetic recombination and DNA repair, while the RuvA-RuvB complex plays an important role in the rescue of blocked DNA replication forks via replication fork reversal (RFR). RuvA specifically binds to HJ cruciform DNA, conferring on it an open structure. The RuvB hexamer acts as an ATP-dependent pump, pulling dsDNA into and through the RuvAB complex. RuvB forms 2 homohexamers on either side of HJ DNA bound by 1 or 2 RuvA tetramers; 4 subunits per hexamer contact DNA at a time. Coordinated motions by a converter formed by DNA-disengaged RuvB subunits stimulates ATP hydrolysis and nucleotide exchange. Immobilization of the converter enables RuvB to convert the ATP-contained energy into a lever motion, pulling 2 nucleotides of DNA out of the RuvA tetramer per ATP hydrolyzed, thus driving DNA branch migration. The RuvB motors rotate together with the DNA substrate, which together with the progressing nucleotide cycle form the mechanistic basis for DNA recombination by continuous HJ branch migration. Branch migration allows RuvC to scan DNA until it finds its consensus sequence, where it cleaves and resolves cruciform DNA. The polypeptide is Holliday junction branch migration complex subunit RuvB (Saccharopolyspora erythraea (strain ATCC 11635 / DSM 40517 / JCM 4748 / NBRC 13426 / NCIMB 8594 / NRRL 2338)).